A 123-amino-acid polypeptide reads, in one-letter code: uncharacterized protein (123 aa).

Residues M1–D12 are compositionally biased toward polar residues. Disordered regions lie at residues M1–D25 and P53–P91. Over residues V61 to G82 the composition is skewed to basic and acidic residues.

This is an uncharacterized protein from Homo sapiens (Human).